A 320-amino-acid polypeptide reads, in one-letter code: Lipoyl synthase (320 aa).

Residues 1–29 show a composition bias toward basic and acidic residues; that stretch reads MIGKLVRDLKIPDQRHPEKAHRPDNDQPR. Residues 1–32 are disordered; the sequence is MIGKLVRDLKIPDQRHPEKAHRPDNDQPRKPS. Cys-60, Cys-65, Cys-71, Cys-86, Cys-90, Cys-93, and Ser-300 together coordinate [4Fe-4S] cluster. Residues 71–289 enclose the Radical SAM core domain; sequence CWGQGHATMM…EKAAYGKGFL (219 aa).

The protein belongs to the radical SAM superfamily. Lipoyl synthase family. [4Fe-4S] cluster serves as cofactor.

The protein resides in the cytoplasm. The enzyme catalyses [[Fe-S] cluster scaffold protein carrying a second [4Fe-4S](2+) cluster] + N(6)-octanoyl-L-lysyl-[protein] + 2 oxidized [2Fe-2S]-[ferredoxin] + 2 S-adenosyl-L-methionine + 4 H(+) = [[Fe-S] cluster scaffold protein] + N(6)-[(R)-dihydrolipoyl]-L-lysyl-[protein] + 4 Fe(3+) + 2 hydrogen sulfide + 2 5'-deoxyadenosine + 2 L-methionine + 2 reduced [2Fe-2S]-[ferredoxin]. Its pathway is protein modification; protein lipoylation via endogenous pathway; protein N(6)-(lipoyl)lysine from octanoyl-[acyl-carrier-protein]: step 2/2. Functionally, catalyzes the radical-mediated insertion of two sulfur atoms into the C-6 and C-8 positions of the octanoyl moiety bound to the lipoyl domains of lipoate-dependent enzymes, thereby converting the octanoylated domains into lipoylated derivatives. In Cereibacter sphaeroides (strain ATCC 17025 / ATH 2.4.3) (Rhodobacter sphaeroides), this protein is Lipoyl synthase.